A 963-amino-acid chain; its full sequence is Unconventional myosin-XIX (963 aa).

Residues 35–758 (HQLDDLTKVN…MLELLECGRA (724 aa)) form the Myosin motor domain. 132–139 (GESGAGKT) is a binding site for ATP. The tract at residues 602 to 624 (LEQLLQVLHNTTPHYIRCIKPNS) is actin-binding. 2 consecutive IQ domains span residues 762 to 782 (EQCA…KQEK) and 783 to 812 (QRRA…AATV). The interval 829–963 (SKELDGMEEK…LLESHRPVQV (135 aa)) is myMOMA region.

Belongs to the TRAFAC class myosin-kinesin ATPase superfamily. Myosin family. Myosin is a hexamer of 2 heavy chains and 4 light chains: interacts with myosin light chains MYL9 and MYL12B.

It is found in the mitochondrion outer membrane. Its subcellular location is the cytoplasm. The protein localises to the cytoskeleton. Actin-based motor molecule with ATPase activity that localizes to the mitochondrion outer membrane. Motor protein that moves towards the plus-end of actin filaments. Required for mitochondrial inheritance during mitosis. May be involved in mitochondrial transport or positioning. The protein is Unconventional myosin-XIX of Mus musculus (Mouse).